Here is a 227-residue protein sequence, read N- to C-terminus: 7-cyano-7-deazaguanine synthase (227 aa).

9–19 (LSGGLDSATVL) contributes to the ATP binding site. Residues cysteine 189, cysteine 199, cysteine 202, and cysteine 205 each contribute to the Zn(2+) site.

The protein belongs to the QueC family. Requires Zn(2+) as cofactor.

It carries out the reaction 7-carboxy-7-deazaguanine + NH4(+) + ATP = 7-cyano-7-deazaguanine + ADP + phosphate + H2O + H(+). It participates in purine metabolism; 7-cyano-7-deazaguanine biosynthesis. Its function is as follows. Catalyzes the ATP-dependent conversion of 7-carboxy-7-deazaguanine (CDG) to 7-cyano-7-deazaguanine (preQ(0)). In Cupriavidus necator (strain ATCC 17699 / DSM 428 / KCTC 22496 / NCIMB 10442 / H16 / Stanier 337) (Ralstonia eutropha), this protein is 7-cyano-7-deazaguanine synthase.